We begin with the raw amino-acid sequence, 213 residues long: Uridine kinase (213 aa).

15–22 (GASASGKS) contributes to the ATP binding site.

It belongs to the uridine kinase family.

The protein resides in the cytoplasm. It carries out the reaction uridine + ATP = UMP + ADP + H(+). The enzyme catalyses cytidine + ATP = CMP + ADP + H(+). Its pathway is pyrimidine metabolism; CTP biosynthesis via salvage pathway; CTP from cytidine: step 1/3. The protein operates within pyrimidine metabolism; UMP biosynthesis via salvage pathway; UMP from uridine: step 1/1. The polypeptide is Uridine kinase (Klebsiella pneumoniae (strain 342)).